The chain runs to 166 residues: Putative esterase sll0410 (166 aa).

Residue D45 is part of the active site.

This sequence belongs to the 4-hydroxybenzoyl-CoA thioesterase family.

The chain is Putative esterase sll0410 from Synechocystis sp. (strain ATCC 27184 / PCC 6803 / Kazusa).